Consider the following 634-residue polypeptide: MSVETQKETLGFQTEVKQLLHLMIHSLYSNKEIFLRELISNASDAADKLRFEALANPELLEGGAELKIRVSFDKEANTVTLEDNGIGMSREDVVTHLGTIAKSGTADFLKNLSGDQKKDSHLIGQFGVGFYSAFIVADKVDVYSRRAGQPASEGVHWSSKGEGEFDVATIDKPERGTRIVLHLKKGEEEFADGWRLRNVIKKYSDHIALPIELPKEFHGEEADKPAEPEWETVNRASALWTRPRAEVKDEEYQEFYKHVAHDFENPLSWSHNKVEGKLEYTSLLYVPGRAPFDLYHREAPRGLKLYVQRVFIMDQADEFLPLYLRFIKGVVDSNDLSLNVSREILQKDPVIDSMKSALTKRVLDMLEKLAKNEPEQYKTFWKNFGQVLKEGPAEDFGNKEKIAGLLRFASTGDDSGEQSVALADYIGRMKEGQDKIYYLTGESYSQVKNSPHLEVFRKKGIEVLLLTDRIDEWLMSYLPEFDGKQFVDVARGDLDLGSLDSEEDKKAQEEVAKSKEGLIERLKKVLDEQVSEVRVSHRLTDSPAILAIGEQDLGLQMRQILEASGQKVPDSKPIFEINPQHPLIEKLDAEPDEDRFGELSHILFDQAALAAGDSLKDPGAYVRRLNKLLVELSA.

The segment at 1 to 342 (MSVETQKETL…SNDLSLNVSR (342 aa)) is a; substrate-binding. Residues 343-559 (EILQKDPVID…EQDLGLQMRQ (217 aa)) are b. The segment at 560–634 (ILEASGQKVP…LNKLLVELSA (75 aa)) is c.

This sequence belongs to the heat shock protein 90 family. In terms of assembly, homodimer.

It localises to the cytoplasm. In terms of biological role, molecular chaperone. Has ATPase activity. The protein is Chaperone protein HtpG of Pseudomonas aeruginosa (strain ATCC 15692 / DSM 22644 / CIP 104116 / JCM 14847 / LMG 12228 / 1C / PRS 101 / PAO1).